The primary structure comprises 210 residues: Small ribosomal subunit protein uS3 (210 aa).

One can recognise a KH type-2 domain in the interval 38-106 (IRAWLKKRLA…EVQINIVEIR (69 aa)).

This sequence belongs to the universal ribosomal protein uS3 family. In terms of assembly, part of the 30S ribosomal subunit. Forms a tight complex with proteins S10 and S14.

Its function is as follows. Binds the lower part of the 30S subunit head. Binds mRNA in the 70S ribosome, positioning it for translation. This Magnetococcus marinus (strain ATCC BAA-1437 / JCM 17883 / MC-1) protein is Small ribosomal subunit protein uS3.